The following is a 210-amino-acid chain: dITP/XTP pyrophosphatase (210 aa).

19–24 is a binding site for substrate; the sequence is SNNPGK. Residues aspartate 51 and aspartate 80 each coordinate Mg(2+). Aspartate 80 serves as the catalytic Proton acceptor. Residues serine 81, 166-169, lysine 189, and 194-195 each bind substrate; these read FGYD and HR.

It belongs to the HAM1 NTPase family. Homodimer. Mg(2+) serves as cofactor.

The catalysed reaction is XTP + H2O = XMP + diphosphate + H(+). It catalyses the reaction dITP + H2O = dIMP + diphosphate + H(+). The enzyme catalyses ITP + H2O = IMP + diphosphate + H(+). Its function is as follows. Pyrophosphatase that catalyzes the hydrolysis of nucleoside triphosphates to their monophosphate derivatives, with a high preference for the non-canonical purine nucleotides XTP (xanthosine triphosphate), dITP (deoxyinosine triphosphate) and ITP. Seems to function as a house-cleaning enzyme that removes non-canonical purine nucleotides from the nucleotide pool, thus preventing their incorporation into DNA/RNA and avoiding chromosomal lesions. This Burkholderia mallei (strain ATCC 23344) protein is dITP/XTP pyrophosphatase.